The sequence spans 547 residues: uncharacterized protein (547 aa).

Positions 38-50 (RNLPFHREREKVE) are enriched in basic and acidic residues. The segment at 38–89 (RNLPFHREREKVESNPNSSDEEDLTSTNNTRSSDNTTSDTEDDSGEDSYQVE) is disordered. The segment covering 62-75 (TSTNNTRSSDNTTS) has biased composition (low complexity). 12 helical membrane-spanning segments follow: residues 108–128 (IYTLLVASFIAIVITANSSIF), 148–168 (LCSATFLLGFAAGSVLFAPLS), 174–194 (LPLYSVTLVIFVVFQIGGGCS), 197–217 (IWSLVIFRFFHGFFGCTPMSA), 233–253 (GALLVFCAAAFVGPLVGPVMG), 265–285 (WDFWINMIWAGLTWVIVCFTM), 346–366 (MYLVFINILLYICMVGYPLIF), 377–397 (GLAILGILVGILLGLALTPII), 418–438 (LFPLFFGSFFIPIALFWLGWT), 445–465 (WAAPMVSGIFLGWGFLYVLAV), 478–500 (AASALSVATFTRYAAGGGMTIVA), and 514–534 (SLLAFVGCGLVPIPFIFFFWG).

It belongs to the major facilitator superfamily. CAR1 family.

It localises to the membrane. This is an uncharacterized protein from Schizosaccharomyces pombe (strain 972 / ATCC 24843) (Fission yeast).